The sequence spans 146 residues: Hemoglobin subunit beta (146 aa).

Valine 1 carries the N-acetylvaline modification. A Globin domain is found at 2 to 146 (HLTGEEKSAV…VANALAHKYH (145 aa)). Threonine 12 is subject to Phosphothreonine. Serine 44 carries the phosphoserine modification. Lysine 59 carries the post-translational modification N6-acetyllysine. Residue histidine 63 participates in heme b binding. Residue lysine 82 is modified to N6-acetyllysine. Histidine 92 provides a ligand contact to heme b. An S-nitrosocysteine modification is found at cysteine 93. At lysine 144 the chain carries N6-acetyllysine.

The protein belongs to the globin family. As to quaternary structure, heterotetramer of two alpha chains and two beta chains. Red blood cells.

Involved in oxygen transport from the lung to the various peripheral tissues. This chain is Hemoglobin subunit beta (HBB), found in Mico argentatus (Silvery marmoset).